We begin with the raw amino-acid sequence, 416 residues long: Serine hydroxymethyltransferase (416 aa).

(6S)-5,6,7,8-tetrahydrofolate is bound by residues Leu-121 and Gly-125 to Leu-127. Lys-229 is subject to N6-(pyridoxal phosphate)lysine. (6S)-5,6,7,8-tetrahydrofolate contacts are provided by residues Glu-245 and Ser-354–Phe-356.

It belongs to the SHMT family. In terms of assembly, homodimer. Pyridoxal 5'-phosphate serves as cofactor.

The protein resides in the cytoplasm. It catalyses the reaction (6R)-5,10-methylene-5,6,7,8-tetrahydrofolate + glycine + H2O = (6S)-5,6,7,8-tetrahydrofolate + L-serine. It functions in the pathway one-carbon metabolism; tetrahydrofolate interconversion. It participates in amino-acid biosynthesis; glycine biosynthesis; glycine from L-serine: step 1/1. In terms of biological role, catalyzes the reversible interconversion of serine and glycine with tetrahydrofolate (THF) serving as the one-carbon carrier. This reaction serves as the major source of one-carbon groups required for the biosynthesis of purines, thymidylate, methionine, and other important biomolecules. Also exhibits THF-independent aldolase activity toward beta-hydroxyamino acids, producing glycine and aldehydes, via a retro-aldol mechanism. This chain is Serine hydroxymethyltransferase, found in Aliivibrio salmonicida (strain LFI1238) (Vibrio salmonicida (strain LFI1238)).